We begin with the raw amino-acid sequence, 31 residues long: Cytochrome b6-f complex subunit 6 (31 aa).

A helical transmembrane segment spans residues 4–26 (LTSYFGFLLAALTITSALFIGLN).

This sequence belongs to the PetL family. As to quaternary structure, the 4 large subunits of the cytochrome b6-f complex are cytochrome b6, subunit IV (17 kDa polypeptide, PetD), cytochrome f and the Rieske protein, while the 4 small subunits are PetG, PetL, PetM and PetN. The complex functions as a dimer.

It is found in the plastid. The protein resides in the chloroplast thylakoid membrane. Functionally, component of the cytochrome b6-f complex, which mediates electron transfer between photosystem II (PSII) and photosystem I (PSI), cyclic electron flow around PSI, and state transitions. PetL is important for photoautotrophic growth as well as for electron transfer efficiency and stability of the cytochrome b6-f complex. This chain is Cytochrome b6-f complex subunit 6, found in Blitum bonus-henricus (Good King Henry).